Here is a 188-residue protein sequence, read N- to C-terminus: Pyridoxal 5'-phosphate synthase subunit PdxT (188 aa).

Residue 47-49 (GES) participates in L-glutamine binding. Residue cysteine 79 is the Nucleophile of the active site. L-glutamine-binding positions include arginine 105 and 134-135 (IR). Catalysis depends on charge relay system residues histidine 170 and glutamate 172.

The protein belongs to the glutaminase PdxT/SNO family. In the presence of PdxS, forms a dodecamer of heterodimers. Only shows activity in the heterodimer.

The catalysed reaction is aldehydo-D-ribose 5-phosphate + D-glyceraldehyde 3-phosphate + L-glutamine = pyridoxal 5'-phosphate + L-glutamate + phosphate + 3 H2O + H(+). It carries out the reaction L-glutamine + H2O = L-glutamate + NH4(+). Its pathway is cofactor biosynthesis; pyridoxal 5'-phosphate biosynthesis. In terms of biological role, catalyzes the hydrolysis of glutamine to glutamate and ammonia as part of the biosynthesis of pyridoxal 5'-phosphate. The resulting ammonia molecule is channeled to the active site of PdxS. The sequence is that of Pyridoxal 5'-phosphate synthase subunit PdxT from Listeria monocytogenes serotype 4a (strain HCC23).